The sequence spans 158 residues: Ribonuclease H (158 aa).

Residues 2 to 143 (PEKIIELFTD…VDALLNRVMD (142 aa)) enclose the RNase H type-1 domain. Mg(2+) contacts are provided by aspartate 11, glutamate 49, aspartate 71, and aspartate 135.

The protein belongs to the RNase H family. Monomer. The cofactor is Mg(2+).

The protein resides in the cytoplasm. The enzyme catalyses Endonucleolytic cleavage to 5'-phosphomonoester.. Functionally, endonuclease that specifically degrades the RNA of RNA-DNA hybrids. In Acidithiobacillus ferrooxidans (strain ATCC 23270 / DSM 14882 / CIP 104768 / NCIMB 8455) (Ferrobacillus ferrooxidans (strain ATCC 23270)), this protein is Ribonuclease H.